The chain runs to 200 residues: MSKFLQQKPIILASSSTIRHKLMKSLGLDFLVVPSNCNEEEIKTRHNSDELVELGITLAKIKALDVSQHYPEHYIIAADQLCVADKRVFNKPLNHQTAVSHLRELSGKEHQQIACLCIVKESKILWQYHETATLTLHHLSEKTIEAYLQAEKPYQSCGAYQYEGLGKWLFKEVQGSEDTILGLPLMPLVNALVNLKVVGI.

Catalysis depends on aspartate 79, which acts as the Proton acceptor.

The protein belongs to the Maf family. It depends on a divalent metal cation as a cofactor.

The protein localises to the cytoplasm. It carries out the reaction a ribonucleoside 5'-triphosphate + H2O = a ribonucleoside 5'-phosphate + diphosphate + H(+). The enzyme catalyses a 2'-deoxyribonucleoside 5'-triphosphate + H2O = a 2'-deoxyribonucleoside 5'-phosphate + diphosphate + H(+). Functionally, nucleoside triphosphate pyrophosphatase. May have a dual role in cell division arrest and in preventing the incorporation of modified nucleotides into cellular nucleic acids. This chain is Nucleoside triphosphate pyrophosphatase, found in Legionella pneumophila (strain Paris).